Consider the following 135-residue polypeptide: ATP synthase epsilon chain (135 aa).

The protein belongs to the ATPase epsilon chain family. F-type ATPases have 2 components, CF(1) - the catalytic core - and CF(0) - the membrane proton channel. CF(1) has five subunits: alpha(3), beta(3), gamma(1), delta(1), epsilon(1). CF(0) has three main subunits: a, b and c.

Its subcellular location is the cell inner membrane. In terms of biological role, produces ATP from ADP in the presence of a proton gradient across the membrane. This is ATP synthase epsilon chain from Chelativorans sp. (strain BNC1).